The primary structure comprises 98 residues: NADH-ubiquinone oxidoreductase chain 4L (98 aa).

The next 3 membrane-spanning stretches (helical) occupy residues 1–21 (MPLI…GMLV), 29–49 (SLLC…LMTL), and 58–78 (IVPI…LALL).

The protein belongs to the complex I subunit 4L family. As to quaternary structure, core subunit of respiratory chain NADH dehydrogenase (Complex I) which is composed of 45 different subunits.

The protein resides in the mitochondrion inner membrane. It catalyses the reaction a ubiquinone + NADH + 5 H(+)(in) = a ubiquinol + NAD(+) + 4 H(+)(out). Its function is as follows. Core subunit of the mitochondrial membrane respiratory chain NADH dehydrogenase (Complex I) which catalyzes electron transfer from NADH through the respiratory chain, using ubiquinone as an electron acceptor. Part of the enzyme membrane arm which is embedded in the lipid bilayer and involved in proton translocation. In Pan paniscus (Pygmy chimpanzee), this protein is NADH-ubiquinone oxidoreductase chain 4L (MT-ND4L).